The following is a 257-amino-acid chain: Sulfur carrier protein FdhD (257 aa).

Residue cysteine 105 is the Cysteine persulfide intermediate of the active site.

This sequence belongs to the FdhD family.

It localises to the cytoplasm. Functionally, required for formate dehydrogenase (FDH) activity. Acts as a sulfur carrier protein that transfers sulfur from IscS to the molybdenum cofactor prior to its insertion into FDH. The chain is Sulfur carrier protein FdhD from Saccharolobus solfataricus (strain ATCC 35092 / DSM 1617 / JCM 11322 / P2) (Sulfolobus solfataricus).